Consider the following 197-residue polypeptide: U1 small nuclear ribonucleoprotein C (197 aa).

A Matrin-type zinc finger spans residues 4 to 36 (YYCEYCDIYLTHSSPVGRRQHNQGRKHISAKIE). The span at 128 to 137 (FHNNKRINNI) shows a compositional bias: low complexity. Positions 128 to 178 (FHNNKRINNIPKPYNNYTNKPITNSSYKNDKQDYRNNNESNDNMNSNNFSN) are disordered. The span at 142–154 (NNYTNKPITNSSY) shows a compositional bias: polar residues. A compositionally biased stretch (low complexity) spans 164–178 (NNESNDNMNSNNFSN).

This sequence belongs to the U1 small nuclear ribonucleoprotein C family. As to quaternary structure, U1 snRNP is composed of the 7 core Sm proteins B/B', D1, D2, D3, E, F and G that assemble in a heptameric protein ring on the Sm site of the small nuclear RNA to form the core snRNP, and at least 3 U1 snRNP-specific proteins U1-70K, U1-A and U1-C. U1-C interacts with U1 snRNA and the 5' splice-site region of the pre-mRNA.

It localises to the nucleus. In terms of biological role, component of the spliceosomal U1 snRNP, which is essential for recognition of the pre-mRNA 5' splice-site and the subsequent assembly of the spliceosome. U1-C is directly involved in initial 5' splice-site recognition for both constitutive and regulated alternative splicing. The interaction with the 5' splice-site seems to precede base-pairing between the pre-mRNA and the U1 snRNA. Stimulates commitment or early (E) complex formation by stabilizing the base pairing of the 5' end of the U1 snRNA and the 5' splice-site region. The sequence is that of U1 small nuclear ribonucleoprotein C (SNRPC) from Plasmodium berghei (strain Anka).